Consider the following 381-residue polypeptide: Cytochrome b (381 aa).

Helical transmembrane passes span 34-54 (FGSLLGLCLIIQIVTGLFLAM), 78-99 (WLIRNIHANGASLFFVCIYFHI), 114-134 (WNIGVILLFLLMATAFVGYVL), and 179-199 (FFAFHFLLPFLITALMIIHVL). 2 residues coordinate heme b: H84 and H98. Positions 183 and 197 each coordinate heme b. H202 is an a ubiquinone binding site. 4 helical membrane passes run 227–247 (YKDALGFLTLLILLGVLALFL), 289–309 (LGGVLALLFSILILMLVPFLH), 321–341 (LTQIFFWTLVTNMLILTWIGG), and 348–368 (FILIGQIASISYFSLFLIALP).

It belongs to the cytochrome b family. As to quaternary structure, the cytochrome bc1 complex contains 3 respiratory subunits (MT-CYB, CYC1 and UQCRFS1), 2 core proteins (UQCRC1 and UQCRC2) and probably 6 low-molecular weight proteins. The cofactor is heme b.

The protein localises to the mitochondrion inner membrane. Component of the ubiquinol-cytochrome c reductase complex (complex III or cytochrome b-c1 complex) that is part of the mitochondrial respiratory chain. The b-c1 complex mediates electron transfer from ubiquinol to cytochrome c. Contributes to the generation of a proton gradient across the mitochondrial membrane that is then used for ATP synthesis. This Isurus oxyrinchus (Shortfin mako shark) protein is Cytochrome b (mt-cyb).